The primary structure comprises 150 residues: C-C motif chemokine 25 (150 aa).

Residues 1 to 23 form the signal peptide; sequence MNLWLLACLVAGFLGAWAPAVHT. 2 disulfides stabilise this stretch: Cys30–Cys58 and Cys31–Cys75.

The protein belongs to the intercrine beta (chemokine CC) family. Specifically expressed by thymic dendritic cells. High levels in thymus and small intestine.

It localises to the secreted. Potentially involved in T-cell development. Recombinant protein shows chemotactic activity on thymocytes, macrophages, THP-1 cells, and dendritics cells but is inactive on peripheral blood lymphocytes and neutrophils. Binds to CCR9. Isoform 2 is an antagonist of isoform 1. Binds to atypical chemokine receptor ACKR4 and mediates the recruitment of beta-arrestin (ARRB1/2) to ACKR4. This is C-C motif chemokine 25 (CCL25) from Homo sapiens (Human).